Here is an 849-residue protein sequence, read N- to C-terminus: Formin-like protein 4 (849 aa).

The first 22 residues, 1–22 (MPPTLALLLFLALSAVAAVGGA), serve as a signal peptide directing secretion. Residues 36 to 104 (IEWTPPPSTA…RARGGGGGGT (69 aa)) are disordered. Residues 38–52 (WTPPPSTASPSPPSP) show a composition bias toward pro residues. Residues 53-64 (DFSSDPSTPATP) are compositionally biased toward low complexity. A helical membrane pass occupies residues 109 to 129 (IVVASAAAAAVLALLAFAAAF). Over residues 185–194 (ARRGMCRDVD) the composition is skewed to basic and acidic residues. The disordered stretch occupies residues 185–364 (ARRGMCRDVD…PEPPTGPVSA (180 aa)). Positions 234–246 (GSGGGGGGEGGGT) are enriched in gly residues. The segment covering 247–279 (WSEASASSPRTTTASRRSLPSLTSDFFPTTPAA) has biased composition (low complexity). 3 stretches are compositionally biased toward pro residues: residues 280-297 (APVPAPAAAAPPPAPPAP), 324-339 (PSNPPPAPPPPPPPPS), and 346-360 (PKPPPPPPPPEPPTG). The FH2 domain maps to 406 to 823 (EAAGDEPRPK…SARSFRISAA (418 aa)).

It belongs to the formin-like family. Class-I subfamily.

It localises to the membrane. This is Formin-like protein 4 (FH4) from Oryza sativa subsp. japonica (Rice).